The chain runs to 342 residues: Signal-regulatory protein beta-2 (342 aa).

The first 32 residues, methionine 1–glycine 32, serve as a signal peptide directing secretion. 2 consecutive Ig-like V-type domains span residues glutamine 33–glutamate 143 and proline 157–glycine 258. The Extracellular segment spans residues glutamine 33 to glycine 287. The cysteines at positions 60 and 127 are disulfide-linked. Residues asparagine 116, asparagine 179, and asparagine 231 are each glycosylated (N-linked (GlcNAc...) asparagine). Cysteine 180 and cysteine 242 form a disulfide bridge. Residues leucine 288–leucine 308 traverse the membrane as a helical segment. Over leucine 309–glutamate 342 the chain is Cytoplasmic. The tract at residues serine 317–glutamate 342 is disordered.

It is found in the membrane. This chain is Signal-regulatory protein beta-2 (SIRPB2), found in Homo sapiens (Human).